The primary structure comprises 312 residues: Malate dehydrogenase (312 aa).

NAD(+) contacts are provided by residues 12 to 17 and Asp-36; that span reads GAGFTG. Substrate is bound by residues Arg-87 and Arg-93. NAD(+) is bound by residues Asn-100 and 123 to 125; that span reads LTN. Substrate is bound at residue Asn-125. At Ser-149 the chain carries Phosphoserine. Arg-156 contacts substrate. His-180 functions as the Proton acceptor in the catalytic mechanism.

Belongs to the LDH/MDH superfamily. MDH type 3 family. As to quaternary structure, homotetramer.

It catalyses the reaction (S)-malate + NAD(+) = oxaloacetate + NADH + H(+). In terms of biological role, catalyzes the reversible oxidation of malate to oxaloacetate. The protein is Malate dehydrogenase of Bacillus israeli.